Consider the following 156-residue polypeptide: Small ribosomal subunit protein uS7 (156 aa).

It belongs to the universal ribosomal protein uS7 family. As to quaternary structure, part of the 30S ribosomal subunit. Contacts proteins S9 and S11.

In terms of biological role, one of the primary rRNA binding proteins, it binds directly to 16S rRNA where it nucleates assembly of the head domain of the 30S subunit. Is located at the subunit interface close to the decoding center, probably blocks exit of the E-site tRNA. The sequence is that of Small ribosomal subunit protein uS7 from Vibrio parahaemolyticus serotype O3:K6 (strain RIMD 2210633).